The sequence spans 175 residues: Ribulose bisphosphate carboxylase small subunit, chloroplastic (175 aa).

The N-terminal 46 residues, 1-46 (MAPSVMASSATTVAPFQGLKSTAGMPVARRSGNSSFGNVSNGGRIR), are a transit peptide targeting the chloroplast. The interaction with large subunit stretch occupies residues 60 to 64 (ETLSY).

This sequence belongs to the RuBisCO small chain family. In terms of assembly, heterohexadecamer of 8 large and 8 small subunits.

It is found in the plastid. The protein localises to the chloroplast. In terms of biological role, ruBisCO catalyzes two reactions: the carboxylation of D-ribulose 1,5-bisphosphate, the primary event in carbon dioxide fixation, as well as the oxidative fragmentation of the pentose substrate. Both reactions occur simultaneously and in competition at the same active site. Although the small subunit is not catalytic it is essential for maximal activity. The chain is Ribulose bisphosphate carboxylase small subunit, chloroplastic from Oryza sativa subsp. indica (Rice).